The chain runs to 307 residues: Ribonuclease Z (307 aa).

7 residues coordinate Zn(2+): histidine 63, histidine 65, aspartate 67, histidine 68, histidine 140, aspartate 211, and histidine 269. Aspartate 67 (proton acceptor) is an active-site residue.

Belongs to the RNase Z family. Homodimer. The cofactor is Zn(2+).

The enzyme catalyses Endonucleolytic cleavage of RNA, removing extra 3' nucleotides from tRNA precursor, generating 3' termini of tRNAs. A 3'-hydroxy group is left at the tRNA terminus and a 5'-phosphoryl group is left at the trailer molecule.. Functionally, zinc phosphodiesterase, which displays some tRNA 3'-processing endonuclease activity. Probably involved in tRNA maturation, by removing a 3'-trailer from precursor tRNA. This is Ribonuclease Z from Bacillus subtilis (strain 168).